A 362-amino-acid chain; its full sequence is Alanine racemase (362 aa).

Residue Lys35 is the Proton acceptor; specific for D-alanine of the active site. Lys35 carries the N6-(pyridoxal phosphate)lysine modification. Arg130 is a binding site for substrate. Residue Tyr257 is the Proton acceptor; specific for L-alanine of the active site. Met305 contacts substrate.

The protein belongs to the alanine racemase family. Pyridoxal 5'-phosphate is required as a cofactor.

The catalysed reaction is L-alanine = D-alanine. It functions in the pathway amino-acid biosynthesis; D-alanine biosynthesis; D-alanine from L-alanine: step 1/1. Functionally, catalyzes the interconversion of L-alanine and D-alanine. May also act on other amino acids. This is Alanine racemase (alr) from Nitrosomonas europaea (strain ATCC 19718 / CIP 103999 / KCTC 2705 / NBRC 14298).